Reading from the N-terminus, the 248-residue chain is Probable transcriptional regulatory protein M446_6579 (248 aa).

The protein belongs to the TACO1 family.

It is found in the cytoplasm. This chain is Probable transcriptional regulatory protein M446_6579, found in Methylobacterium sp. (strain 4-46).